Consider the following 134-residue polypeptide: Putative pre-16S rRNA nuclease (134 aa).

It belongs to the YqgF nuclease family.

It is found in the cytoplasm. Could be a nuclease involved in processing of the 5'-end of pre-16S rRNA. The protein is Putative pre-16S rRNA nuclease of Hydrogenovibrio crunogenus (strain DSM 25203 / XCL-2) (Thiomicrospira crunogena).